An 889-amino-acid polypeptide reads, in one-letter code: Alanine--tRNA ligase (889 aa).

His-569, His-573, Cys-671, and His-675 together coordinate Zn(2+).

It belongs to the class-II aminoacyl-tRNA synthetase family. Zn(2+) serves as cofactor.

It is found in the cytoplasm. It carries out the reaction tRNA(Ala) + L-alanine + ATP = L-alanyl-tRNA(Ala) + AMP + diphosphate. In terms of biological role, catalyzes the attachment of alanine to tRNA(Ala) in a two-step reaction: alanine is first activated by ATP to form Ala-AMP and then transferred to the acceptor end of tRNA(Ala). Also edits incorrectly charged Ser-tRNA(Ala) and Gly-tRNA(Ala) via its editing domain. This chain is Alanine--tRNA ligase, found in Parasynechococcus marenigrum (strain WH8102).